We begin with the raw amino-acid sequence, 279 residues long: Ethanolamine utilization protein EutJ (279 aa).

It belongs to the EutJ family.

Its pathway is amine and polyamine degradation; ethanolamine degradation. May protect ethanolamine ammonia-lyase (EAL, eutB-eutC) from inhibition, may function in assembling the bacterial microcompartment and/or in refolding EAL, suggesting it may have chaperone activity. Overexpression of eutJ and eutS in E.coli leads to multiple BMC-like structures; eutS expression alone leads to 1 BMC-like structure per cell. Functionally, expression of the eut operon allows this bacteria to use ethanolamine (EA) as a carbon, nitrogen and energy source. It relies on cobalamin (vitamin B12) both as a cofactor for the ethanolamine ammonia-lyase (EAL) activity and to induce the operon. EA enhances bacterial survival in macrophages in a concentration-dependent manner, suggesting it is an important nutrient during infection. This is Ethanolamine utilization protein EutJ from Salmonella typhimurium (strain LT2 / SGSC1412 / ATCC 700720).